The sequence spans 105 residues: MKTKVFLGLILSAAVTACLCRPAAKAPGGSHRPTSSLARRDWPEPPSQEQQQRFISRFLPHVFAELSDRKGFVQGNGAVEALHDHFYPDWMDFGRRSTEDAADAA.

An N-terminal signal peptide occupies residues 1–20 (MKTKVFLGLILSAAVTACLC). A propeptide spanning residues 21 to 38 (RPAAKAPGGSHRPTSSLA) is cleaved from the precursor. Residues 24-51 (AKAPGGSHRPTSSLARRDWPEPPSQEQQ) form a disordered region. Tyrosine 87 carries the sulfotyrosine modification. Residue phenylalanine 93 is modified to Phenylalanine amide. The propeptide occupies 97–105 (STEDAADAA).

It belongs to the gastrin/cholecystokinin family.

It is found in the secreted. Functionally, potent stimulus of gastric acid, but not of pancreatic secretion. The protein is Gastrin/cholecystokinin-like peptide of Gallus gallus (Chicken).